The following is a 589-amino-acid chain: Sphingosine-1-phosphate lyase (589 aa).

Topologically, residues 1–58 are lumenal; sequence MSGVSNKTVSINGWYGMPIHLLREEGDFAQFMILTINELKIAIHGYLRNTPWYNMLKD. An N-linked (GlcNAc...) asparagine glycan is attached at N6. The helical transmembrane segment at 59–76 threads the bilayer; it reads YLFVIFCYKLISNFFYLL. The Cytoplasmic portion of the chain corresponds to 77–589; sequence KVYGPVRLAV…LGPGEDTATK (513 aa). At K380 the chain carries N6-(pyridoxal phosphate)lysine.

The protein belongs to the group II decarboxylase family. Sphingosine-1-phosphate lyase subfamily. As to quaternary structure, homodimer. Pyridoxal 5'-phosphate serves as cofactor. Glycosylated.

The protein localises to the endoplasmic reticulum membrane. The enzyme catalyses sphinganine 1-phosphate = hexadecanal + phosphoethanolamine. It catalyses the reaction (4R)-hydroxysphinganine 1-phosphate = (2R)-hydroxyhexadecanal + phosphoethanolamine. It functions in the pathway lipid metabolism; sphingolipid metabolism. In terms of biological role, sphingosine-1-phosphate lyase that cleaves phosphorylated sphingoid bases (PSBs), such as sphingosine-1-phosphate, into fatty aldehydes and phosphoethanolamine. Prefers C-16 dihydrosphingosine-l-phosphate (DHS-P) as a substrate. Regulates intracellular levels of sphingolipid long-chain base phosphates (LCBPs). Plays a role in the regulation of global responses to nutrient deprivation in yeast. This is Sphingosine-1-phosphate lyase from Saccharomyces cerevisiae (strain ATCC 204508 / S288c) (Baker's yeast).